Here is a 260-residue protein sequence, read N- to C-terminus: Vaa serine proteinase homolog 1 (260 aa).

Residues 1 to 18 (MVLIRVLANLLVLQLSYA) form the signal peptide. Residues 19 to 24 (QKSSEL) constitute a propeptide that is removed on maturation. A Peptidase S1 domain is found at 25–251 (VIGGDECNIN…YTDWIQSIIA (227 aa)). 6 disulfides stabilise this stretch: cysteine 31–cysteine 165, cysteine 52–cysteine 68, cysteine 100–cysteine 258, cysteine 144–cysteine 212, cysteine 176–cysteine 191, and cysteine 202–cysteine 227. N-linked (GlcNAc...) asparagine glycosylation is present at asparagine 123. The segment at 172–186 (DYSVCQKVYRKLPEK) is key residues for binding to FVIIIa. A glycan (N-linked (GlcNAc...) asparagine) is linked at asparagine 253.

The protein belongs to the peptidase S1 family. Snake venom subfamily. Post-translationally, N-glycosylated. The toxin exists in multiple glycoforms. In terms of tissue distribution, expressed by the venom gland.

Its subcellular location is the secreted. In terms of biological role, this is the first member of the serine protease family that has strong anticoagulant activity and lacks enzymatic activity. It inhibits activities of three blood coagulation complexes: (1) prothrombinase complex (composed of blood coagulation factors Va and Xa (F5 and F10)) (IC(50)=164.1 nM), (2) intrinsic tenase complex (composed of factors VIIIa and IXa (F8 and F9)), and (3) extrinsic tenase complex (composed of tissue factor and factor VIIa (F7)). The toxin also has been observed to bind prothrombin, factor FVa, non-activated and activated forms of factors FVII (F7) (FVII and FVIIa), factor FVIIIa (F8), factors FIX and FIXa (F9) and factors FX and FXa (F10). The toxin inhibits the activity of the intrinsic tenase complex mainly by competing with FIXa (F9) for binding to FVIIIa (F8). The protein is Vaa serine proteinase homolog 1 of Vipera ammodytes ammodytes (Western sand viper).